Reading from the N-terminus, the 729-residue chain is MSWLNSVLLALTSVQPYMVPATVIGLVSFAFLCFIFFYFFRAVKIINGLKKYTQSINGIENNEPGNQLQHLQSLFVQPELKHAWNEFEESLHSQYELEDGEEKIVRIRATAPSASFFSEQQLVDIPLNTEFFKHLPGILTGVGIIGTFYGLMIGLNHFDPSTPEQVSSSVNNLLRDVLYAFLGSAFAITFSILITWLEKFCLAKCYKYLEKFTAALDALYDSGVGEEYLASLVKSSNESATQARHLKESLVTDLRDMLLHLANSQKVENERLATTLSTTYRETGQQFAEQVSGAIENSLKSPLDKIAGAVQTASGDQSGMVQNMLQDVLTAFMAKLDTTFGQQFTNLNEMMGQTVGAIQTMQTGFGALLQDMRQVSDDSRQGSAQLIEQLLSEMKSGQQAMQAGMNDMLTSLQTSVAKIGAEGEGAGERMARQLEKMFADSEAREKAQAEHMTAFIEAIQNSVQQGQSATMEKMAASVESLGEQLGSLFGQIDKGQQQISANQQANQQSLHEQTQRVMSEVDDQIKQLVETVASQHQGTTETLRLLAEQTNRQIQDMHTGADKMRLAAERFEHAGDRVSEANHLTADVLNKAQSAGSSLSLATSELTSVVADYRNNREAVSKSIAMLELLAANTQSEQTTRTQFIADLKQHGERLQSYNREAQAFMENVSDVLGKGFEDFSEGVSRSLDKTLGKLDVEMAKASTLLAGSVEQIGESVSELDDVLSRVRA.

A run of 3 helical transmembrane segments spans residues 20-40 (PATV…FYFF), 135-155 (LPGI…MIGL), and 177-197 (VLYA…ITWL).

Belongs to the MotA family.

It is found in the cell inner membrane. In terms of biological role, component of antiviral defense system Zorya type I, composed of ZorA, ZorB, ZorC and ZorD. Expression of Zorya type I in E.coli (strain MG1655) confers 10,000-fold resistance to phage SECphi27, 100-fold resistance to lambda, and 10-fold resistance to T7. While most T7 infected Zorya-containing cells undergo abortive infection, a minority produce viable phage progeny. These eventually accumulate to a high multiplicity of infection, leading to culture collapse by 2 hours after initial infection. ZorA and ZorB probably assemble in the cell inner membrane and exert their effect there. In Escherichia coli O139:H28 (strain E24377A / ETEC), this protein is Zorya protein ZorA.